The following is a 301-amino-acid chain: tRNA pseudouridine synthase B (301 aa).

Catalysis depends on Asp-45, which acts as the Nucleophile.

Belongs to the pseudouridine synthase TruB family. Type 1 subfamily.

It catalyses the reaction uridine(55) in tRNA = pseudouridine(55) in tRNA. Responsible for synthesis of pseudouridine from uracil-55 in the psi GC loop of transfer RNAs. This Streptomyces avermitilis (strain ATCC 31267 / DSM 46492 / JCM 5070 / NBRC 14893 / NCIMB 12804 / NRRL 8165 / MA-4680) protein is tRNA pseudouridine synthase B.